The following is a 239-amino-acid chain: Small ribosomal subunit protein uS3c (239 aa).

The KH type-2 domain maps to 43-139 (IKNYIQKNRK…RFNISIEKVK (97 aa)). The disordered stretch occupies residues 50–74 (NRKKGSNRKIESDSSSEVITHNRKM).

The protein belongs to the universal ribosomal protein uS3 family. In terms of assembly, part of the 30S ribosomal subunit.

It is found in the plastid. It localises to the chloroplast. The polypeptide is Small ribosomal subunit protein uS3c (rps3) (Triticum aestivum (Wheat)).